Here is a 213-residue protein sequence, read N- to C-terminus: Nucleolar protein 12 (213 aa).

A coiled-coil region spans residues 32-95; that stretch reads GFHKRKVERK…RLVTAKTESV (64 aa). Positions 117 to 213 are disordered; it reads ARLLGLPTPE…LTGKARHSGE (97 aa). Composition is skewed to basic residues over residues 169 to 181 and 197 to 213; these read AHSR…KRLR and SKTR…HSGE.

Belongs to the RRP17 family. In terms of assembly, interacts with KIAA1191.

The protein localises to the nucleus. It localises to the nucleolus. The protein resides in the cytoplasm. In terms of biological role, multifunctional RNA binding protein that plays a role in RNA metabolism and DNA maintenance. Participates in the resolution of DNA stress and the maintenance of genome integrity by localizing to sites of DNA insults. Also plays a role in proper nucleolar organization by limiting nucleolar size and regulating nucleolar number. Mechanistically, regulates the nucleolar levels of fibrillarin and nucleolin, two key players in pre-rRNA processing and ribosome assembly. The polypeptide is Nucleolar protein 12 (NOL12) (Bos taurus (Bovine)).